The chain runs to 444 residues: Adenylyltransferase and sulfurtransferase UBA4 (444 aa).

Residues G81, D102, 109-113 (SNLHR), K126, and 170-171 (DT) each bind ATP. C212 and C215 together coordinate Zn(2+). C229 serves as the catalytic Glycyl thioester intermediate; for adenylyltransferase activity. Residues C290 and C293 each coordinate Zn(2+). One can recognise a Rhodanese domain in the interval 343–442 (KTKPYVLLDV…YIDEINPSLP (100 aa)). C401 (cysteine persulfide intermediate; for sulfurtransferase activity) is an active-site residue.

The protein in the N-terminal section; belongs to the HesA/MoeB/ThiF family. UBA4 subfamily. It depends on Zn(2+) as a cofactor.

It localises to the cytoplasm. The protein resides in the cytosol. It participates in tRNA modification; 5-methoxycarbonylmethyl-2-thiouridine-tRNA biosynthesis. Functionally, plays a central role in 2-thiolation of mcm(5)S(2)U at tRNA wobble positions of cytosolic tRNA(Lys), tRNA(Glu) and tRNA(Gln). Acts by mediating the C-terminal thiocarboxylation of sulfur carrier URM1. Its N-terminus first activates URM1 as acyl-adenylate (-COAMP), then the persulfide sulfur on the catalytic cysteine is transferred to URM1 to form thiocarboxylation (-COSH) of its C-terminus. The reaction probably involves hydrogen sulfide that is generated from the persulfide intermediate and that acts as a nucleophile towards URM1. Subsequently, a transient disulfide bond is formed. Does not use thiosulfate as sulfur donor; NFS1 probably acting as a sulfur donor for thiocarboxylation reactions. Prior mcm(5) tRNA modification by the elongator complex is required for 2-thiolation. May also be involved in protein urmylation. The protein is Adenylyltransferase and sulfurtransferase UBA4 of Kluyveromyces lactis (strain ATCC 8585 / CBS 2359 / DSM 70799 / NBRC 1267 / NRRL Y-1140 / WM37) (Yeast).